The chain runs to 397 residues: Aromatic-amino-acid aminotransferase (397 aa).

Gly34, Tyr66, Trp131, and Asn184 together coordinate substrate. N6-(pyridoxal phosphate)lysine is present on Lys247. Positions 281 and 375 each coordinate substrate.

It belongs to the class-I pyridoxal-phosphate-dependent aminotransferase family. In terms of assembly, homodimer. The cofactor is pyridoxal 5'-phosphate.

The protein resides in the cytoplasm. It catalyses the reaction an aromatic L-alpha-amino acid + 2-oxoglutarate = an aromatic oxo-acid + L-glutamate. The enzyme catalyses (3S)-3-methyl-L-phenylalanine + 2-oxoglutarate = (3S)-2-oxo-3-phenylbutanoate + L-glutamate. It participates in amino-acid biosynthesis; L-phenylalanine biosynthesis; L-phenylalanine from phenylpyruvate (ArAT route): step 1/1. It functions in the pathway amino-acid biosynthesis; L-tyrosine biosynthesis; L-tyrosine from (4-hydroxyphenyl)pyruvate: step 1/1. In terms of biological role, broad-specificity enzyme that catalyzes the transamination of 2-ketoisocaproate, p-hydroxyphenylpyruvate, and phenylpyruvate to yield leucine, tyrosine, and phenylalanine, respectively. In vitro, is able to catalyze the conversion of beta-methyl phenylpyruvate to the nonproteinogenic amino acid (2S,3S)-beta-methyl-phenylalanine, a building block of the antibiotic mannopeptimycin produced by Streptomyces hygroscopicus NRRL3085. This is Aromatic-amino-acid aminotransferase (tyrB) from Escherichia coli (strain K12).